The chain runs to 118 residues: Large ribosomal subunit protein eL18 (118 aa).

Belongs to the eukaryotic ribosomal protein eL18 family.

The sequence is that of Large ribosomal subunit protein eL18 from Sulfurisphaera tokodaii (strain DSM 16993 / JCM 10545 / NBRC 100140 / 7) (Sulfolobus tokodaii).